A 164-amino-acid polypeptide reads, in one-letter code: MNIVDQQTFRDAMSCMGAAVNIITTDGPAGRAGFTASAVCSVTDTPPTLLVCLNRGASVWPVFNENRTLCVNTLSAGQEPLSNLFGGKTPMEHRFAAARWQTGVTGCPQLEKALVSFDCRISQVVSVGTHDILFCAIEAIHRHATPYGLVWFDRSYHALMRPAC.

Belongs to the non-flavoprotein flavin reductase family. RutF subfamily.

The enzyme catalyses FMNH2 + NAD(+) = FMN + NADH + 2 H(+). Functionally, catalyzes the reduction of FMN to FMNH2 which is used to reduce pyrimidine by RutA via the Rut pathway. The chain is FMN reductase (NADH) RutF from Escherichia coli O150:H5 (strain SE15).